We begin with the raw amino-acid sequence, 486 residues long: UDP-N-acetylmuramate--L-alanine ligase (486 aa).

Position 126–132 (126–132 (GTHGKTS)) interacts with ATP.

It belongs to the MurCDEF family.

It is found in the cytoplasm. It carries out the reaction UDP-N-acetyl-alpha-D-muramate + L-alanine + ATP = UDP-N-acetyl-alpha-D-muramoyl-L-alanine + ADP + phosphate + H(+). It participates in cell wall biogenesis; peptidoglycan biosynthesis. In terms of biological role, cell wall formation. The sequence is that of UDP-N-acetylmuramate--L-alanine ligase from Corynebacterium glutamicum (strain R).